Here is a 266-residue protein sequence, read N- to C-terminus: Imidazole glycerol phosphate synthase subunit HisF (266 aa).

Catalysis depends on residues Asp-11 and Asp-130.

It belongs to the HisA/HisF family. As to quaternary structure, heterodimer of HisH and HisF.

The protein resides in the cytoplasm. It catalyses the reaction 5-[(5-phospho-1-deoxy-D-ribulos-1-ylimino)methylamino]-1-(5-phospho-beta-D-ribosyl)imidazole-4-carboxamide + L-glutamine = D-erythro-1-(imidazol-4-yl)glycerol 3-phosphate + 5-amino-1-(5-phospho-beta-D-ribosyl)imidazole-4-carboxamide + L-glutamate + H(+). Its pathway is amino-acid biosynthesis; L-histidine biosynthesis; L-histidine from 5-phospho-alpha-D-ribose 1-diphosphate: step 5/9. IGPS catalyzes the conversion of PRFAR and glutamine to IGP, AICAR and glutamate. The HisF subunit catalyzes the cyclization activity that produces IGP and AICAR from PRFAR using the ammonia provided by the HisH subunit. The protein is Imidazole glycerol phosphate synthase subunit HisF of Nitrosopumilus maritimus (strain SCM1).